A 264-amino-acid polypeptide reads, in one-letter code: 4-oxalocrotonate decarboxylase (264 aa).

This sequence belongs to the hydratase/decarboxylase family.

The catalysed reaction is (3E)-2-oxohex-3-enedioate + H(+) = 2-oxopent-4-enoate + CO2. It functions in the pathway aromatic compound metabolism; benzoate degradation via hydroxylation. This Pseudomonas sp. (strain CF600) protein is 4-oxalocrotonate decarboxylase (dmpH).